Here is a 207-residue protein sequence, read N- to C-terminus: Uridine kinase (207 aa).

11–18 provides a ligand contact to ATP; that stretch reads GGSGSGKT.

It belongs to the uridine kinase family.

The protein localises to the cytoplasm. It carries out the reaction uridine + ATP = UMP + ADP + H(+). It catalyses the reaction cytidine + ATP = CMP + ADP + H(+). It functions in the pathway pyrimidine metabolism; CTP biosynthesis via salvage pathway; CTP from cytidine: step 1/3. Its pathway is pyrimidine metabolism; UMP biosynthesis via salvage pathway; UMP from uridine: step 1/1. In Staphylococcus aureus (strain Mu3 / ATCC 700698), this protein is Uridine kinase.